Consider the following 195-residue polypeptide: Holliday junction branch migration complex subunit RuvA (195 aa).

Residues 1–64 form a domain I region; it reads MIASIRGIIQ…EDALTLYGFS (64 aa). The interval 65 to 142 is domain II; the sequence is DPAQRNLFEQ…DLRQLSGTTP (78 aa). The tract at residues 143–151 is flexible linker; sequence GNVSTLDRE. Residues 151-195 are domain III; the sequence is ELTDILISLGYSATEAAAAIAALPGDAPPTLEERLRLALRYFGSA.

This sequence belongs to the RuvA family. Homotetramer. Forms an RuvA(8)-RuvB(12)-Holliday junction (HJ) complex. HJ DNA is sandwiched between 2 RuvA tetramers; dsDNA enters through RuvA and exits via RuvB. An RuvB hexamer assembles on each DNA strand where it exits the tetramer. Each RuvB hexamer is contacted by two RuvA subunits (via domain III) on 2 adjacent RuvB subunits; this complex drives branch migration. In the full resolvosome a probable DNA-RuvA(4)-RuvB(12)-RuvC(2) complex forms which resolves the HJ.

The protein localises to the cytoplasm. The RuvA-RuvB-RuvC complex processes Holliday junction (HJ) DNA during genetic recombination and DNA repair, while the RuvA-RuvB complex plays an important role in the rescue of blocked DNA replication forks via replication fork reversal (RFR). RuvA specifically binds to HJ cruciform DNA, conferring on it an open structure. The RuvB hexamer acts as an ATP-dependent pump, pulling dsDNA into and through the RuvAB complex. HJ branch migration allows RuvC to scan DNA until it finds its consensus sequence, where it cleaves and resolves the cruciform DNA. This chain is Holliday junction branch migration complex subunit RuvA, found in Chloroflexus aurantiacus (strain ATCC 29364 / DSM 637 / Y-400-fl).